Reading from the N-terminus, the 63-residue chain is Large ribosomal subunit protein bL32 (63 aa).

The disordered stretch occupies residues 1–27 (MANPKAKMSKSRRDKRRAQFNARTKPA). A compositionally biased stretch (basic residues) spans 7 to 18 (KMSKSRRDKRRA).

The protein belongs to the bacterial ribosomal protein bL32 family.

This chain is Large ribosomal subunit protein bL32, found in Pelodictyon phaeoclathratiforme (strain DSM 5477 / BU-1).